Consider the following 179-residue polypeptide: Interleukin-10 (179 aa).

The signal sequence occupies residues 1-19; that stretch reads MPSPALLCCCLVLLAGVGA. 2 disulfide bridges follow: Cys-31/Cys-127 and Cys-81/Cys-133. Asn-135 carries an N-linked (GlcNAc...) asparagine glycan.

Belongs to the IL-10 family. In terms of assembly, homodimer. Interacts with IL10RA and IL10RB.

Its subcellular location is the secreted. Functionally, major immune regulatory cytokine that acts on many cells of the immune system where it has profound anti-inflammatory functions, limiting excessive tissue disruption caused by inflammation. Mechanistically, IL10 binds to its heterotetrameric receptor comprising IL10RA and IL10RB leading to JAK1 and STAT2-mediated phosphorylation of STAT3. In turn, STAT3 translocates to the nucleus where it drives expression of anti-inflammatory mediators. Targets antigen-presenting cells (APCs) such as macrophages and monocytes and inhibits their release of pro-inflammatory cytokines including granulocyte-macrophage colony-stimulating factor /GM-CSF, granulocyte colony-stimulating factor/G-CSF, IL-1 alpha, IL-1 beta, IL-6, IL-8 and TNF-alpha. Also interferes with antigen presentation by reducing the expression of MHC-class II and co-stimulatory molecules, thereby inhibiting their ability to induce T cell activation. In addition, controls the inflammatory response of macrophages by reprogramming essential metabolic pathways including mTOR signaling. This Vulpes vulpes (Red fox) protein is Interleukin-10 (IL10).